The sequence spans 151 residues: Large ribosomal subunit protein bL9 (151 aa).

It belongs to the bacterial ribosomal protein bL9 family.

In terms of biological role, binds to the 23S rRNA. The sequence is that of Large ribosomal subunit protein bL9 from Nitrosococcus oceani (strain ATCC 19707 / BCRC 17464 / JCM 30415 / NCIMB 11848 / C-107).